Reading from the N-terminus, the 501-residue chain is Glycerol kinase (501 aa).

Threonine 12 contacts ADP. Threonine 12, threonine 13, and serine 14 together coordinate ATP. Threonine 12 contributes to the sn-glycerol 3-phosphate binding site. Arginine 16 is a binding site for ADP. The sn-glycerol 3-phosphate site is built by arginine 82, glutamate 83, tyrosine 134, and aspartate 244. Arginine 82, glutamate 83, tyrosine 134, aspartate 244, and glutamine 245 together coordinate glycerol. ADP contacts are provided by threonine 266 and glycine 310. Residues threonine 266, glycine 310, glutamine 314, and glycine 411 each coordinate ATP. ADP is bound by residues glycine 411 and asparagine 415.

It belongs to the FGGY kinase family.

The enzyme catalyses glycerol + ATP = sn-glycerol 3-phosphate + ADP + H(+). Its pathway is polyol metabolism; glycerol degradation via glycerol kinase pathway; sn-glycerol 3-phosphate from glycerol: step 1/1. Its activity is regulated as follows. Inhibited by fructose 1,6-bisphosphate (FBP). Its function is as follows. Key enzyme in the regulation of glycerol uptake and metabolism. Catalyzes the phosphorylation of glycerol to yield sn-glycerol 3-phosphate. The polypeptide is Glycerol kinase (Methylobacterium radiotolerans (strain ATCC 27329 / DSM 1819 / JCM 2831 / NBRC 15690 / NCIMB 10815 / 0-1)).